A 152-amino-acid chain; its full sequence is 6,7-dimethyl-8-ribityllumazine synthase (152 aa).

5-amino-6-(D-ribitylamino)uracil contacts are provided by residues Phe18, 49-51 (ALE), and 75-77 (CVI). Residue 80–81 (ET) participates in (2S)-2-hydroxy-3-oxobutyl phosphate binding. His83 acts as the Proton donor in catalysis. Asn108 lines the 5-amino-6-(D-ribitylamino)uracil pocket. Arg122 contributes to the (2S)-2-hydroxy-3-oxobutyl phosphate binding site.

It belongs to the DMRL synthase family.

It carries out the reaction (2S)-2-hydroxy-3-oxobutyl phosphate + 5-amino-6-(D-ribitylamino)uracil = 6,7-dimethyl-8-(1-D-ribityl)lumazine + phosphate + 2 H2O + H(+). It participates in cofactor biosynthesis; riboflavin biosynthesis; riboflavin from 2-hydroxy-3-oxobutyl phosphate and 5-amino-6-(D-ribitylamino)uracil: step 1/2. Catalyzes the formation of 6,7-dimethyl-8-ribityllumazine by condensation of 5-amino-6-(D-ribitylamino)uracil with 3,4-dihydroxy-2-butanone 4-phosphate. This is the penultimate step in the biosynthesis of riboflavin. The chain is 6,7-dimethyl-8-ribityllumazine synthase from Bartonella bacilliformis (strain ATCC 35685 / KC583 / Herrer 020/F12,63).